Reading from the N-terminus, the 695-residue chain is Calcium-dependent serine proteinase (695 aa).

The N-terminal stretch at Met-1 to Ala-21 is a signal peptide. One can recognise a CUB 1 domain in the interval Glu-22–Ile-136. 4 disulfides stabilise this stretch: Cys-71–Cys-89, Cys-141–Cys-153, Cys-149–Cys-162, and Cys-164–Cys-177. The EGF-like; calcium-binding domain maps to Asp-137–Gly-178. Residue Asn-155 is modified to (3R)-3-hydroxyasparagine. Asn-180 carries N-linked (GlcNAc...) asparagine glycosylation. Intrachain disulfides connect Cys-181–Cys-208, Cys-240–Cys-257, Cys-300–Cys-347, Cys-327–Cys-360, Cys-365–Cys-410, and Cys-392–Cys-428. Residues Cys-181 to Asp-296 enclose the CUB 2 domain. 2 consecutive Sushi domains span residues Ile-298–Pro-362 and Val-363–Pro-430. Asn-413 carries N-linked (GlcNAc...) asparagine glycosylation. The Peptidase S1 domain occupies Ile-445–Gln-687. Active-site charge relay system residues include His-482 and Asp-536. 2 disulfide bridges follow: Cys-602–Cys-625 and Cys-634–Cys-666. Ser-638 acts as the Charge relay system in catalysis.

Belongs to the peptidase S1 family. As to quaternary structure, heterodimer, consisting of heavy and light chains with disulfide bonds. The heavy chain is expected to be a regulatory subunit and the light chain contains the catalytic site. Post-translationally, the iron and 2-oxoglutarate dependent 3-hydroxylation of aspartate and asparagine is (R) stereospecific within EGF domains.

The protein localises to the secreted. Its subcellular location is the extracellular space. It localises to the extracellular matrix. Functionally, capable of degrading extracellular matrix proteins. CASP degrades type I and IV collagen and fibronectin in the presence of calcium. This Mesocricetus auratus (Golden hamster) protein is Calcium-dependent serine proteinase.